We begin with the raw amino-acid sequence, 880 residues long: Alanine--tRNA ligase (880 aa).

Residues H566, H570, C668, and H672 each contribute to the Zn(2+) site.

Belongs to the class-II aminoacyl-tRNA synthetase family. Requires Zn(2+) as cofactor.

The protein resides in the cytoplasm. It carries out the reaction tRNA(Ala) + L-alanine + ATP = L-alanyl-tRNA(Ala) + AMP + diphosphate. Functionally, catalyzes the attachment of alanine to tRNA(Ala) in a two-step reaction: alanine is first activated by ATP to form Ala-AMP and then transferred to the acceptor end of tRNA(Ala). Also edits incorrectly charged Ser-tRNA(Ala) and Gly-tRNA(Ala) via its editing domain. This Acetivibrio thermocellus (strain ATCC 27405 / DSM 1237 / JCM 9322 / NBRC 103400 / NCIMB 10682 / NRRL B-4536 / VPI 7372) (Clostridium thermocellum) protein is Alanine--tRNA ligase.